Here is an 80-residue protein sequence, read N- to C-terminus: Large ribosomal subunit protein bL31B (80 aa).

It belongs to the bacterial ribosomal protein bL31 family. Type B subfamily. In terms of assembly, part of the 50S ribosomal subunit.

This Xanthomonas campestris pv. campestris (strain 8004) protein is Large ribosomal subunit protein bL31B.